Consider the following 784-residue polypeptide: Ribosome biogenesis protein BOP1 homolog (784 aa).

The span at Met-1–Gly-11 shows a compositional bias: basic residues. The tract at residues Met-1–Ile-159 is disordered. Acidic residues-rich tracts occupy residues Ser-27–Leu-36, Glu-45–Asp-54, Ser-62–Gly-73, and Ala-84–Glu-111. Composition is skewed to basic and acidic residues over residues Lys-112 to Pro-123 and Leu-138 to Tyr-148. Over residues Gln-149–Asp-158 the composition is skewed to acidic residues. WD repeat units lie at residues Gly-445 to Glu-486, Asp-488 to Val-526, Thr-570 to Pro-612, Lys-615 to Lys-653, Thr-656 to Gln-695, Leu-699 to Gln-738, and Arg-754 to Thr-784.

The protein belongs to the WD repeat BOP1/ERB1 family.

The protein localises to the nucleus. The protein resides in the nucleolus. It is found in the nucleoplasm. Its function is as follows. Required for maturation of ribosomal RNAs and formation of the large ribosomal subunit. This is Ribosome biogenesis protein BOP1 homolog from Drosophila sechellia (Fruit fly).